The chain runs to 189 residues: GMP synthase [glutamine-hydrolyzing] subunit A (189 aa).

The Glutamine amidotransferase type-1 domain occupies Met-1–Glu-189. The active-site Nucleophile is Cys-76. Catalysis depends on residues His-163 and Glu-165.

Heterodimer composed of a glutamine amidotransferase subunit (A) and a GMP-binding subunit (B).

The enzyme catalyses XMP + L-glutamine + ATP + H2O = GMP + L-glutamate + AMP + diphosphate + 2 H(+). It functions in the pathway purine metabolism; GMP biosynthesis; GMP from XMP (L-Gln route): step 1/1. Functionally, catalyzes the synthesis of GMP from XMP. In Methanococcus maripaludis (strain DSM 14266 / JCM 13030 / NBRC 101832 / S2 / LL), this protein is GMP synthase [glutamine-hydrolyzing] subunit A.